The chain runs to 183 residues: DNA-directed RNA polymerase subunit Rpo7 (183 aa).

An S1 motif domain is found at His82–Lys164.

Belongs to the eukaryotic RPB7/RPC8 RNA polymerase subunit family. Part of the 13-subunit RNA polymerase complex. Forms a stalk with Rpo4 that extends from the main structure.

The protein resides in the cytoplasm. The catalysed reaction is RNA(n) + a ribonucleoside 5'-triphosphate = RNA(n+1) + diphosphate. DNA-dependent RNA polymerase (RNAP) catalyzes the transcription of DNA into RNA using the four ribonucleoside triphosphates as substrates. In terms of biological role, reconstitution experiments show this subunit is required for basic activity. This is DNA-directed RNA polymerase subunit Rpo7 from Sulfolobus acidocaldarius (strain ATCC 33909 / DSM 639 / JCM 8929 / NBRC 15157 / NCIMB 11770).